The chain runs to 200 residues: LHFPL tetraspan subfamily member 6 protein (200 aa).

A signal peptide spans 1-23; it reads MASSLTCTGVIWALLSFLSAATS. The next 3 membrane-spanning stretches (helical) occupy residues 84 to 104, 123 to 143, and 166 to 186; these read ICTIVTGLGCGLLLLVALTAL, GIQFLGGLLIGAGCALYPLGW, and IGWAYYCTGAGAAAAMLLCTW.

It belongs to the LHFP family.

It is found in the membrane. This chain is LHFPL tetraspan subfamily member 6 protein, found in Rattus norvegicus (Rat).